Reading from the N-terminus, the 937-residue chain is Isoleucine--tRNA ligase (937 aa).

Positions 58-68 (PYANGSIHIGH) match the 'HIGH' region motif. An L-isoleucyl-5'-AMP-binding site is contributed by Glu-561. Residues 602–606 (KMSKS) carry the 'KMSKS' region motif. ATP is bound at residue Lys-605. 4 residues coordinate Zn(2+): Cys-900, Cys-903, Cys-920, and Cys-923.

Belongs to the class-I aminoacyl-tRNA synthetase family. IleS type 1 subfamily. Monomer. It depends on Zn(2+) as a cofactor.

Its subcellular location is the cytoplasm. The enzyme catalyses tRNA(Ile) + L-isoleucine + ATP = L-isoleucyl-tRNA(Ile) + AMP + diphosphate. Its function is as follows. Catalyzes the attachment of isoleucine to tRNA(Ile). As IleRS can inadvertently accommodate and process structurally similar amino acids such as valine, to avoid such errors it has two additional distinct tRNA(Ile)-dependent editing activities. One activity is designated as 'pretransfer' editing and involves the hydrolysis of activated Val-AMP. The other activity is designated 'posttransfer' editing and involves deacylation of mischarged Val-tRNA(Ile). The polypeptide is Isoleucine--tRNA ligase (Pectobacterium atrosepticum (strain SCRI 1043 / ATCC BAA-672) (Erwinia carotovora subsp. atroseptica)).